Reading from the N-terminus, the 504-residue chain is uncharacterized protein (504 aa).

3 helical membrane-spanning segments follow: residues 146–166 (TSAG…INIA), 196–216 (SSAA…ADVL), and 330–350 (SMAL…VAVA). 372 to 492 (FLNIDVPLQA…EIAYGVARTR (121 aa)) contributes to the a nucleoside 3',5'-cyclic phosphate binding site.

Its subcellular location is the cell membrane. This is an uncharacterized protein from Mycobacterium tuberculosis (strain CDC 1551 / Oshkosh).